Here is a 185-residue protein sequence, read N- to C-terminus: Prenylated Rab acceptor protein 1 (185 aa).

Residues 1-78 (MAAEKDQQKD…RNVEYYQSNY (78 aa)) are Cytoplasmic-facing. Residues 30 to 54 (AGRERLERRRATIRPWSSFVDQRRF) are required for interaction with prenylated RAB3A and VAMP2. Transmembrane regions (helical) follow at residues 79–94 (VFVF…VTSP) and 95–112 (MLLV…ILYL). Residues 113–131 (RTLQSKFVLFGREVSPAHQ) lie on the Cytoplasmic side of the membrane. 2 helical membrane-spanning segments follow: residues 132-148 (YALA…LAGA) and 149-165 (GSAV…VIGS). The interval 165–185 (SHAAFHQMEAVDGEELQMEPV) is required for interaction with GDI1. The Cytoplasmic segment spans residues 166–185 (HAAFHQMEAVDGEELQMEPV). The segment at 175-185 (VDGEELQMEPV) is required for interaction with prenylated RAB3A and VAMP2. The tract at residues 175–185 (VDGEELQMEPV) is homodimerization.

Belongs to the PRA1 family. As to quaternary structure, homodimer. Interacts with VAMP2 (synaptobrevin-2), prenylated Rab proteins, GDI1, NDRG1 and PCLO.

Its subcellular location is the cell membrane. The protein resides in the cytoplasm. The protein localises to the golgi apparatus. It is found in the cytoplasmic vesicle. It localises to the secretory vesicle. Its subcellular location is the synaptic vesicle. In terms of biological role, general Rab protein regulator required for vesicle formation from the Golgi complex. May control vesicle docking and fusion by mediating the action of Rab GTPases to the SNARE complexes. In addition it inhibits the removal of Rab GTPases from the membrane by GDI1. This Canis lupus familiaris (Dog) protein is Prenylated Rab acceptor protein 1 (RABAC1).